The following is an 81-amino-acid chain: Putative defensin-like protein 25 (81 aa).

A signal peptide spans 1-23 (MASLKVFSFALILVLTFSVDVEG). Cystine bridges form between Cys-33/Cys-81, Cys-43/Cys-68, Cys-52/Cys-77, and Cys-56/Cys-79.

Belongs to the DEFL family.

It is found in the secreted. This chain is Putative defensin-like protein 25, found in Arabidopsis thaliana (Mouse-ear cress).